The sequence spans 1794 residues: Non-reducing polyketide synthase nscA (1794 aa).

An N-terminal acylcarrier protein transacylase domain (SAT) region spans residues 19-256 (DLKDLFRRLH…PLPVYDGLCH (238 aa)). Residues 389–822 (ASKLAIVGMA…GGNTTVLLED (434 aa)) form the Ketosynthase family 3 (KS3) domain. The segment covering 428–440 (DRFDLNTHYDPTG) has biased composition (basic and acidic residues). Residues 428-448 (DRFDLNTHYDPTGKTENATQT) are disordered. Residues Cys-562, His-697, and His-740 each act as for beta-ketoacyl synthase activity in the active site. Positions 927 to 1230 (TFTGQGAYYS…SVISSCRRNE (304 aa)) are malonyl-CoA:ACP transacylase (MAT) domain. A product template (PT) domain region spans residues 1314–1633 (TSLVHQITTE…RLLMDRFFSP (320 aa)). The N-terminal hotdog fold stretch occupies residues 1318–1454 (HQITTETVEA…CVVRFEDPAA (137 aa)). Residues 1318–1628 (HQITTETVEA…FRRVPRLLMD (311 aa)) form the PKS/mFAS DH domain. The Proton acceptor; for dehydratase activity role is filled by His-1350. A C-terminal hotdog fold region spans residues 1482–1628 (ASKLSKPLAY…FRRVPRLLMD (147 aa)). The active-site Proton donor; for dehydratase activity is Asp-1539. Residues 1637 to 1719 (SHTEKQLQET…ATSDRGDSTD (83 aa)) form a disordered region. Over residues 1644–1655 (QETAPSATNVKK) the composition is skewed to polar residues. The Carrier domain maps to 1717-1794 (STDAGVVGQC…EMTAWLEEYC (78 aa)). An O-(pantetheine 4'-phosphoryl)serine modification is found at Ser-1754.

The cofactor is pantetheine 4'-phosphate.

The protein operates within secondary metabolite biosynthesis. Non-reducing polyketide synthase; part of the gene cluster that mediates the biosynthesis of neosartoricin, a prenylated anthracenone that exhibits T-cell antiproliferative activity, suggestive of a physiological role as an immunosuppressive agent. The non-reducing polyketide synthase nscA probably synthesizes and cyclizes the decaketide backbone. The hydrolase nscB then mediates the product release through hydrolysis followed by spontaneous decarboxylation. The prenyltransferase nscD catalyzes the addition of the dimethylallyl group to the aromatic C5. The FAD-dependent monooxygenase nscC is then responsible for the stereospecific hydroxylation at C2. There is no gene encoding O-acetyltransferase in the nsc gene cluster; thus, the last step of 2-O-acetylation leading to neosartoricin may be catalyzed by an unidentified O-acetyltransferase. The sequence is that of Non-reducing polyketide synthase nscA from Aspergillus fumigatus (strain ATCC MYA-4609 / CBS 101355 / FGSC A1100 / Af293) (Neosartorya fumigata).